Reading from the N-terminus, the 395-residue chain is Zinc finger protein 200 (395 aa).

Residues 157 to 208 (VNGSNPEGEDPEREPVENEDYREKSSDDDEMDSSLVSQQPPDNQEKERLNTS) are disordered. Residues 169–181 (REPVENEDYREKS) are compositionally biased toward basic and acidic residues. Residues 246 to 395 (RRTRRWYTCP…HSACKTRKQK (150 aa)) form an interaction with PRMT3 region. C2H2-type zinc fingers lie at residues 252–274 (YTCPLCGKQFNESSYLISHQRTH), 280–302 (YDCNHCGKSFNHKTNLNKHERIH), 308–330 (YSCSQCGKNFRQNSHRSRHEGIH), 336–358 (FKCPECGKTFPKNEEFVLHLQSH), and 364–386 (YGCKKCGRRFGRLSNCTRHEKTH).

As to quaternary structure, interacts (via C-terminus) with PRMT3 (via zinc-finger); the interaction is direct and required to localize protein arginine N-methyltransferase PRMT3 to the nucleus and inhibit its proteasomal degradation. Highly expressed in testis, weakly expressed in spleen, thymus, prostate, ovary, small intestine colon and peripheral blood leukocytes.

It localises to the nucleus. Its function is as follows. Localizes protein arginine N-methyltransferase PRMT3 to the nucleus. The protein is Zinc finger protein 200 (ZNF200) of Homo sapiens (Human).